Consider the following 521-residue polypeptide: Probable methylmalonate-semialdehyde/malonate-semialdehyde dehydrogenase [acylating], mitochondrial (521 aa).

NAD(+) is bound by residues Ala170, Phe172, Lys196, Glu199, Arg200, and Ser249. Cys304 acts as the Nucleophile in catalysis. Glu404 is an NAD(+) binding site.

This sequence belongs to the aldehyde dehydrogenase family. As to quaternary structure, homotetramer.

The protein resides in the mitochondrion. It carries out the reaction 2-methyl-3-oxopropanoate + NAD(+) + CoA + H2O = propanoyl-CoA + hydrogencarbonate + NADH + H(+). It catalyses the reaction 3-oxopropanoate + NAD(+) + CoA + H2O = hydrogencarbonate + acetyl-CoA + NADH + H(+). Its function is as follows. Probable malonate and methylmalonate semialdehyde dehydrogenase involved in the catabolism of valine, thymine, and compounds catabolized by way of beta-alanine, including uracil and cytidine. In Anopheles gambiae (African malaria mosquito), this protein is Probable methylmalonate-semialdehyde/malonate-semialdehyde dehydrogenase [acylating], mitochondrial.